The following is a 515-amino-acid chain: Bifunctional purine biosynthesis protein PurH (515 aa).

The region spanning 1–145 is the MGS-like domain; it reads MTKRALISVS…KNHASVTVVV (145 aa).

The protein belongs to the PurH family.

The enzyme catalyses (6R)-10-formyltetrahydrofolate + 5-amino-1-(5-phospho-beta-D-ribosyl)imidazole-4-carboxamide = 5-formamido-1-(5-phospho-D-ribosyl)imidazole-4-carboxamide + (6S)-5,6,7,8-tetrahydrofolate. It catalyses the reaction IMP + H2O = 5-formamido-1-(5-phospho-D-ribosyl)imidazole-4-carboxamide. The protein operates within purine metabolism; IMP biosynthesis via de novo pathway; 5-formamido-1-(5-phospho-D-ribosyl)imidazole-4-carboxamide from 5-amino-1-(5-phospho-D-ribosyl)imidazole-4-carboxamide (10-formyl THF route): step 1/1. Its pathway is purine metabolism; IMP biosynthesis via de novo pathway; IMP from 5-formamido-1-(5-phospho-D-ribosyl)imidazole-4-carboxamide: step 1/1. The protein is Bifunctional purine biosynthesis protein PurH of Streptococcus uberis (strain ATCC BAA-854 / 0140J).